The primary structure comprises 461 residues: Photosystem II CP43 reaction center protein (461 aa).

Positions 1–2 (ME) are excised as a propeptide. Thr-3 carries the post-translational modification N-acetylthreonine. Thr-3 carries the phosphothreonine modification. Helical transmembrane passes span 57–81 (LFEV…PHLA), 122–143 (LIGP…KDKN), 166–188 (KAMY…RVIT), 243–263 (KPWA…LSYS), and 279–300 (WFNN…ASQS). Glu-355 is a binding site for [CaMn4O5] cluster. Residues 435–459 (RARAAAAGFEKGIDRDNEPVLSMKP) form a helical membrane-spanning segment.

It belongs to the PsbB/PsbC family. PsbC subfamily. PSII is composed of 1 copy each of membrane proteins PsbA, PsbB, PsbC, PsbD, PsbE, PsbF, PsbH, PsbI, PsbJ, PsbK, PsbL, PsbM, PsbT, PsbX, PsbY, PsbZ, Psb30/Ycf12, at least 3 peripheral proteins of the oxygen-evolving complex and a large number of cofactors. It forms dimeric complexes. Binds multiple chlorophylls and provides some of the ligands for the Ca-4Mn-5O cluster of the oxygen-evolving complex. It may also provide a ligand for a Cl- that is required for oxygen evolution. PSII binds additional chlorophylls, carotenoids and specific lipids. serves as cofactor.

Its subcellular location is the plastid. The protein resides in the chloroplast thylakoid membrane. Functionally, one of the components of the core complex of photosystem II (PSII). It binds chlorophyll and helps catalyze the primary light-induced photochemical processes of PSII. PSII is a light-driven water:plastoquinone oxidoreductase, using light energy to abstract electrons from H(2)O, generating O(2) and a proton gradient subsequently used for ATP formation. The sequence is that of Photosystem II CP43 reaction center protein from Tupiella akineta (Green alga).